Reading from the N-terminus, the 130-residue chain is Large-conductance mechanosensitive channel (130 aa).

2 helical membrane-spanning segments follow: residues 11 to 31 (FALK…AAFG) and 70 to 90 (GAFI…FIFV).

The protein belongs to the MscL family. As to quaternary structure, homopentamer.

Its subcellular location is the cell membrane. Functionally, channel that opens in response to stretch forces in the membrane lipid bilayer. May participate in the regulation of osmotic pressure changes within the cell. This Listeria welshimeri serovar 6b (strain ATCC 35897 / DSM 20650 / CCUG 15529 / CIP 8149 / NCTC 11857 / SLCC 5334 / V8) protein is Large-conductance mechanosensitive channel.